Here is a 356-residue protein sequence, read N- to C-terminus: Altered inheritance of mitochondria protein 23, mitochondrial (356 aa).

Residues 1 to 32 (MLKVPLSDVLSQKMLFLKSFRYFHCTKYFSRD) constitute a mitochondrion transit peptide.

This sequence belongs to the AIM23 family.

It localises to the mitochondrion. The polypeptide is Altered inheritance of mitochondria protein 23, mitochondrial (AIM23) (Saccharomyces cerevisiae (strain RM11-1a) (Baker's yeast)).